The primary structure comprises 1309 residues: Tetratricopeptide repeat protein 41 (1309 aa).

6 TPR repeats span residues Pro399–Ile432, Trp651–Glu684, Leu817–Ser851, Leu859–Phe892, Met989–Ala1024, and Ser1042–His1079.

Its subcellular location is the cytoplasm. This Rattus norvegicus (Rat) protein is Tetratricopeptide repeat protein 41.